The chain runs to 76 residues: Cyclin-dependent kinases regulatory subunit (76 aa).

The protein belongs to the CKS family. In terms of assembly, forms a homohexamer that can probably bind six kinase subunits.

Its function is as follows. Binds to the catalytic subunit of the cyclin dependent kinases and is essential for their biological function. The protein is Cyclin-dependent kinases regulatory subunit of Patella vulgata (Common limpet).